A 288-amino-acid polypeptide reads, in one-letter code: 5,10-methylenetetrahydrofolate reductase (288 aa).

FAD is bound by residues Ala-51, His-73, Gly-106, Asp-107, Ala-118, Tyr-140, His-144, and Lys-159. Residue Asp-107 coordinates (6S)-5-methyl-5,6,7,8-tetrahydrofolate. Position 175 (Gln-175) interacts with (6S)-5-methyl-5,6,7,8-tetrahydrofolate. Gln-175 contacts NADH.

The protein belongs to the methylenetetrahydrofolate reductase family. Requires FAD as cofactor.

The catalysed reaction is (6S)-5-methyl-5,6,7,8-tetrahydrofolate + NAD(+) = (6R)-5,10-methylene-5,6,7,8-tetrahydrofolate + NADH + H(+). It functions in the pathway one-carbon metabolism; tetrahydrofolate interconversion. It participates in amino-acid biosynthesis; L-methionine biosynthesis via de novo pathway. In terms of biological role, catalyzes the NADH-dependent reduction of 5,10-methylenetetrahydrofolate to 5-methyltetrahydrofolate. Is required to provide the methyl group necessary for methionine synthetase to convert homocysteine to methionine; the methyl group is given by 5-methyltetrahydrofolate. Is required for Sphingobium SYK-6 to grow on vanillate or syringate as the sole source of carbon. The polypeptide is 5,10-methylenetetrahydrofolate reductase (Sphingobium sp. (strain NBRC 103272 / SYK-6)).